The chain runs to 203 residues: Guanylate kinase (203 aa).

The Guanylate kinase-like domain occupies 5 to 184 (GMLIVLSGPS…AVQRIEKIIE (180 aa)). 12–19 (GPSGVGKG) provides a ligand contact to ATP.

Belongs to the guanylate kinase family.

Its subcellular location is the cytoplasm. The enzyme catalyses GMP + ATP = GDP + ADP. Essential for recycling GMP and indirectly, cGMP. The chain is Guanylate kinase from Latilactobacillus sakei subsp. sakei (strain 23K) (Lactobacillus sakei subsp. sakei).